Reading from the N-terminus, the 347-residue chain is UPF0284 protein M164_0030 (347 aa).

This sequence belongs to the UPF0284 family.

This Saccharolobus islandicus (strain M.16.4 / Kamchatka #3) (Sulfolobus islandicus) protein is UPF0284 protein M164_0030.